Consider the following 212-residue polypeptide: MRAATALPSIPSSSSPSPMASDPTELRCSSPESSGDAGAEDPAAVDAAEESGGEGGSGHIAAGTEAAPPRPPEPEPEKVARHGVLPLLGKPYFTCIMCKSHVQPPFQVVVPRSFAPLLPSRTTPATLSWRGRSWGMRFTGGRLIQRLEAGWRGFAVDNDLRLGDGCVFELLVGGGGEQERVEFRVQVLRAEIPARIRGRAGGYTSATPIVID.

The tract at residues 1-78 is disordered; that stretch reads MRAATALPSI…PRPPEPEPEK (78 aa). Low complexity-rich tracts occupy residues 8-23 and 36-46; these read PSIP…ASDP and DAGAEDPAAVD. Positions 93-191 form a DNA-binding region, TF-B3; that stretch reads FTCIMCKSHV…EFRVQVLRAE (99 aa).

The protein resides in the nucleus. The polypeptide is B3 domain-containing protein Os04g0386900 (Oryza sativa subsp. japonica (Rice)).